Consider the following 172-residue polypeptide: 3-phenylpropionate/cinnamic acid dioxygenase subunit beta (172 aa).

The protein belongs to the bacterial ring-hydroxylating dioxygenase beta subunit family. As to quaternary structure, this dioxygenase system consists of four proteins: the two subunits of the hydroxylase component (HcaE and HcaF), a ferredoxin (HcaC) and a ferredoxin reductase (HcaD).

The enzyme catalyses 3-phenylpropanoate + NADH + O2 + H(+) = 3-(cis-5,6-dihydroxycyclohexa-1,3-dien-1-yl)propanoate + NAD(+). The catalysed reaction is (E)-cinnamate + NADH + O2 + H(+) = (2E)-3-(cis-5,6-dihydroxycyclohexa-1,3-dien-1-yl)prop-2-enoate + NAD(+). It participates in aromatic compound metabolism; 3-phenylpropanoate degradation. In terms of biological role, part of the multicomponent 3-phenylpropionate dioxygenase. Converts 3-phenylpropionic acid (PP) and cinnamic acid (CI) into 3-phenylpropionate-dihydrodiol (PP-dihydrodiol) and cinnamic acid-dihydrodiol (CI-dihydrodiol), respectively. The chain is 3-phenylpropionate/cinnamic acid dioxygenase subunit beta from Escherichia coli O17:K52:H18 (strain UMN026 / ExPEC).